A 307-amino-acid chain; its full sequence is Putative S-adenosyl-L-methionine-dependent methyltransferase Mflv_5023 (307 aa).

S-adenosyl-L-methionine-binding positions include D133 and 162–163; that span reads DL. Residues 213 to 234 form a disordered region; the sequence is SRLAVESVPSQQSADQDEMREK.

Belongs to the UPF0677 family.

In terms of biological role, exhibits S-adenosyl-L-methionine-dependent methyltransferase activity. The chain is Putative S-adenosyl-L-methionine-dependent methyltransferase Mflv_5023 from Mycolicibacterium gilvum (strain PYR-GCK) (Mycobacterium gilvum (strain PYR-GCK)).